Consider the following 315-residue polypeptide: Probable cell division protein WhiA (315 aa).

Positions 278-312 form a DNA-binding region, H-T-H motif; it reads SLSDLAGMIEGQELTKSGINHRMRKLMQIVKELNH.

The protein belongs to the WhiA family.

Functionally, involved in cell division and chromosome segregation. This is Probable cell division protein WhiA from Oenococcus oeni (strain ATCC BAA-331 / PSU-1).